Here is a 585-residue protein sequence, read N- to C-terminus: Ras-specific guanine nucleotide-releasing factor RalGPS1 (585 aa).

Residues 50-289 (TPEEFASQIT…YKLSLRIEPG (240 aa)) form the Ras-GEF domain. Disordered regions lie at residues 289 to 342 (GSSS…KSHS) and 378 to 410 (RSPR…SEEM). The segment covering 303-312 (AGPSAGSSSA) has biased composition (low complexity). The PXXP signature appears at 330–333 (PTPP). Residues 385–396 (THTSSTAITNGL) show a composition bias toward polar residues. In terms of domain architecture, PH spans 459–571 (VPTMEGPLRR…WHKHLDDACK (113 aa)). Residues 461–585 (TMEGPLRRKT…QVPANLMSFE (125 aa)) are required for stimulation of nucleotide exchange by RALA.

In terms of assembly, interacts with the SH3 domains of GRB2, NCK1, PLCG1 and SRC.

The protein resides in the cytoplasm. Its subcellular location is the cell membrane. Functionally, guanine nucleotide exchange factor for the small GTPase RALA. May be involved in cytoskeleton organization. This chain is Ras-specific guanine nucleotide-releasing factor RalGPS1 (Ralgps1), found in Mus musculus (Mouse).